Consider the following 113-residue polypeptide: Protein FMC1 homolog (113 aa).

The segment at 94–113 is disordered; it reads SAGLVGLQLPHQPGGKGWEP.

It belongs to the FMC1 family. As to quaternary structure, interacts with ATPAF2.

The protein resides in the mitochondrion. Its function is as follows. Plays a role in the assembly/stability of the mitochondrial membrane ATP synthase (F(1)F(0) ATP synthase or Complex V). This chain is Protein FMC1 homolog, found in Rattus norvegicus (Rat).